A 1025-amino-acid chain; its full sequence is Error-prone DNA polymerase (1025 aa).

It belongs to the DNA polymerase type-C family. DnaE2 subfamily.

The protein localises to the cytoplasm. The catalysed reaction is DNA(n) + a 2'-deoxyribonucleoside 5'-triphosphate = DNA(n+1) + diphosphate. In terms of biological role, DNA polymerase involved in damage-induced mutagenesis and translesion synthesis (TLS). It is not the major replicative DNA polymerase. In Pseudomonas fluorescens (strain Pf0-1), this protein is Error-prone DNA polymerase.